Consider the following 352-residue polypeptide: Histidinol-phosphate aminotransferase (352 aa).

The residue at position 221 (K221) is an N6-(pyridoxal phosphate)lysine.

Belongs to the class-II pyridoxal-phosphate-dependent aminotransferase family. Histidinol-phosphate aminotransferase subfamily. Homodimer. It depends on pyridoxal 5'-phosphate as a cofactor.

It catalyses the reaction L-histidinol phosphate + 2-oxoglutarate = 3-(imidazol-4-yl)-2-oxopropyl phosphate + L-glutamate. It functions in the pathway amino-acid biosynthesis; L-histidine biosynthesis; L-histidine from 5-phospho-alpha-D-ribose 1-diphosphate: step 7/9. This chain is Histidinol-phosphate aminotransferase, found in Staphylococcus aureus (strain MSSA476).